Consider the following 300-residue polypeptide: Haloalkane dehalogenase (300 aa).

The 124-residue stretch at 32 to 155 folds into the AB hydrolase-1 domain; that stretch reads AIVFQHGNPT…PAVRGVFQGF (124 aa). Aspartate 109 functions as the Nucleophile in the catalytic mechanism. Glutamate 133 serves as the catalytic Proton donor. The active-site Proton acceptor is histidine 273.

This sequence belongs to the haloalkane dehalogenase family. Type 2 subfamily. In terms of assembly, monomer.

The catalysed reaction is 1-haloalkane + H2O = a halide anion + a primary alcohol + H(+). In terms of biological role, catalyzes hydrolytic cleavage of carbon-halogen bonds in halogenated aliphatic compounds, leading to the formation of the corresponding primary alcohols, halide ions and protons. The chain is Haloalkane dehalogenase from Mycobacterium tuberculosis (strain ATCC 25177 / H37Ra).